The sequence spans 68 residues: uncharacterized protein (68 aa).

The interval Met-1 to Lys-42 is disordered.

This is an uncharacterized protein from Saccharomyces cerevisiae (strain ATCC 204508 / S288c) (Baker's yeast).